The following is a 318-amino-acid chain: Petal death protein (318 aa).

Residues 1-3 constitute a propeptide, removed in mature form; it reads MAP. Positions 1–24 are disordered; the sequence is MAPPNGTTNGETEVATQGSYTAVS. Positions 107, 109, and 142 each coordinate Mg(2+).

Belongs to the isocitrate lyase/PEP mutase superfamily. In terms of assembly, homodimer and homotetramer formed by a dimer of homodimer. The cofactor is Mg(2+). Mn(2+) is required as a cofactor. Requires Fe(2+) as cofactor. Co(2+) serves as cofactor. As to expression, accumulates in senescing flower petals.

The catalysed reaction is oxaloacetate + H2O = oxalate + acetate + H(+). Functionally, catalyzes cleavage of the C(2)-C(3) bond in oxaloacetate and in (2R)-alkyl malate derivatives to form oxalate and acetate, and alkyl carboxylates and R-ketocarboxylates, respectively. This is Petal death protein from Dianthus caryophyllus (Carnation).